Consider the following 60-residue polypeptide: Toxin S4C8 (60 aa).

4 disulfide bridges follow: C3/C22, C17/C39, C41/C52, and C53/C58. The tract at residues 41 to 48 (CPTAMWPY) is important for binding to L-type calcium channels.

This sequence belongs to the three-finger toxin family. Short-chain subfamily. L-type calcium blocker sub-subfamily. As to expression, expressed by the venom gland.

Its subcellular location is the secreted. This specific blocker of the L-type calcium channel (Cav1/CACNA1) is a smooth muscle relaxant and an inhibitor of cardiac contractions. This chain is Toxin S4C8, found in Dendroaspis jamesoni kaimosae (Eastern Jameson's mamba).